The chain runs to 223 residues: Voltage-dependent calcium channel gamma-1 subunit (223 aa).

At 1–10 (MSQTKTAKVR) the chain is on the cytoplasmic side. Residues 11–29 (VTLFFILAGGVLAMVAVVT) form a helical membrane-spanning segment. Residues 30–109 (DHWAVLSPHL…TQKEYSISAA (80 aa)) are Extracellular-facing. N-linked (GlcNAc...) asparagine glycosylation is found at N43 and N80. C57 and C81 are oxidised to a cystine. A helical transmembrane segment spans residues 110 to 130 (AIAIFSLGFIIIGSICAFLSF). Over 131–135 (GNKRD) the chain is Cytoplasmic. Residues 136 to 156 (YLLRPASMFYAFAGLCLIVSV) form a helical membrane-spanning segment. Topologically, residues 157 to 180 (EVMRQSVKRMIDSEDTVWIEYYYS) are extracellular. Residues 181–205 (WSFACACAGFTLLFLGGLFLLLFSL) traverse the membrane as a helical segment. The Cytoplasmic portion of the chain corresponds to 206 to 223 (PRMPQNPWESCMDTESEH).

Belongs to the PMP-22/EMP/MP20 family. CACNG subfamily. Component of a calcium channel complex consisting of a pore-forming alpha subunit (CACNA1S) and the ancillary subunits CACNB1 or CACNB2, CACNG1 and CACNA2D1. The channel complex contains alpha, beta, gamma and delta subunits in a 1:1:1:1 ratio, i.e. it contains either CACNB1 or CACNB2. Post-translationally, N-glycosylated. As to expression, skeletal muscle.

It localises to the cell membrane. Its subcellular location is the sarcolemma. Regulatory subunit of the voltage-gated calcium channel that gives rise to L-type calcium currents in skeletal muscle. Regulates channel inactivation kinetics. This Rattus norvegicus (Rat) protein is Voltage-dependent calcium channel gamma-1 subunit (Cacng1).